The chain runs to 306 residues: MSKPRSNRRHIDGVLLIDKPYDISSNNALQKARWLLNAAKAGHTGVLDPLATGLLPVCLGEATKFSSYLLDADKGYRATVRFGVVTTTGDVEGEVVSERPVEFGREQLEAALARFRGEISQVPPMYSALKHQGKPLYEYARAGIEVPREARQVTIRKLELLSFDGVSAEIDVLCTKGTYIRTLGCDIGEALGCGAHLTALRRTATGGFSLDESHRLADLESLDMPAREALLMPADVLVMHFPQLELADEEIGKFLHGQPVRFEQKCEKMQRFRVYQQSSRRFVGLGEARGDGRLHPIRLLANQAQA.

D48 serves as the catalytic Nucleophile.

Belongs to the pseudouridine synthase TruB family. Type 1 subfamily.

It catalyses the reaction uridine(55) in tRNA = pseudouridine(55) in tRNA. Its function is as follows. Responsible for synthesis of pseudouridine from uracil-55 in the psi GC loop of transfer RNAs. In Chromobacterium violaceum (strain ATCC 12472 / DSM 30191 / JCM 1249 / CCUG 213 / NBRC 12614 / NCIMB 9131 / NCTC 9757 / MK), this protein is tRNA pseudouridine synthase B.